Consider the following 376-residue polypeptide: Alcohol dehydrogenase class-3 (376 aa).

Residue Ala1 is modified to N-acetylalanine. Zn(2+) contacts are provided by Cys47, His69, Cys99, Cys102, Cys105, Cys113, and Cys176.

Belongs to the zinc-containing alcohol dehydrogenase family. Class-III subfamily. In terms of assembly, homodimer. Zn(2+) is required as a cofactor.

It localises to the cytoplasm. The enzyme catalyses a primary alcohol + NAD(+) = an aldehyde + NADH + H(+). It catalyses the reaction a secondary alcohol + NAD(+) = a ketone + NADH + H(+). It carries out the reaction S-(hydroxymethyl)glutathione + NADP(+) = S-formylglutathione + NADPH + H(+). The catalysed reaction is S-(hydroxymethyl)glutathione + NAD(+) = S-formylglutathione + NADH + H(+). The enzyme catalyses S-nitrosoglutathione + NADH + H(+) = S-(hydroxysulfenamide)glutathione + NAD(+). In terms of biological role, class-III ADH is remarkably ineffective in oxidizing ethanol, but it readily catalyzes the oxidation of long-chain primary alcohols and the oxidation of S-(hydroxymethyl) glutathione. Also acts as a S-nitroso-glutathione reductase by catalyzing the NADH-dependent reduction of S-nitrosoglutathione, thereby regulating protein S-nitrosylation. The sequence is that of Alcohol dehydrogenase class-3 from Scyliorhinus canicula (Small-spotted catshark).